Here is a 152-residue protein sequence, read N- to C-terminus: Small ribosomal subunit protein uS15 (152 aa).

Residues 1–11 (MARMHARRRGK) are compositionally biased toward basic residues. A disordered region spans residues 1-25 (MARMHARRRGKSSSVRPARNEAPAW).

The protein belongs to the universal ribosomal protein uS15 family. Part of the 30S ribosomal subunit.

This is Small ribosomal subunit protein uS15 from Methanoregula boonei (strain DSM 21154 / JCM 14090 / 6A8).